We begin with the raw amino-acid sequence, 270 residues long: tRNA pseudouridine synthase A (270 aa).

The active-site Nucleophile is the D51. A substrate-binding site is contributed by Y109.

Belongs to the tRNA pseudouridine synthase TruA family. Homodimer.

It carries out the reaction uridine(38/39/40) in tRNA = pseudouridine(38/39/40) in tRNA. Formation of pseudouridine at positions 38, 39 and 40 in the anticodon stem and loop of transfer RNAs. The polypeptide is tRNA pseudouridine synthase A (Burkholderia multivorans (strain ATCC 17616 / 249)).